The sequence spans 410 residues: Magnesium transporter NIPA3 (410 aa).

Residues 1-67 lie on the Extracellular side of the membrane; sequence MGAQVRLPPG…ISANVENKYS (67 aa). Asn-25, Asn-35, and Asn-50 each carry an N-linked (GlcNAc...) asparagine glycan. The helical transmembrane segment at 68 to 88 threads the bilayer; it reads LYVGLVLAVSSSIFIGSSFIL. At 89–114 the chain is on the cytoplasmic side; sequence KKKGLLQLASKGITRAGQGGHSYLKE. Residues 115-135 traverse the membrane as a helical segment; sequence WLWWVGLLSMGVGEAANFAAY. A topological domain (extracellular) is located at residue Ala-136. The helical transmembrane segment at 137–157 threads the bilayer; it reads FAPATLVTPLGALSVLISAIL. At 158 to 165 the chain is on the cytoplasmic side; that stretch reads SSYFLNEH. Residues 166–186 form a helical membrane-spanning segment; sequence LNIHGKIGCILSILGSTVMVI. The Extracellular portion of the chain corresponds to 187-207; sequence HAPQEEEVTSLHEMEMKLRDP. The helical transmembrane segment at 208 to 228 threads the bilayer; the sequence is GFISFAVIVTVISLVLILIVA. At 229–233 the chain is on the cytoplasmic side; the sequence is PKKGQ. Residues 234-254 traverse the membrane as a helical segment; sequence TNILVYISICSLIGAFSVSSV. Residues 255–273 are Extracellular-facing; it reads KGLGIAIKELIEWKPVYKH. Residues 274-294 form a helical membrane-spanning segment; the sequence is PLVFVLLAVLVLSVTTQINYL. The Cytoplasmic portion of the chain corresponds to 295 to 304; that stretch reads NKALDTFNTS. A helical transmembrane segment spans residues 305–325; sequence IVTPIYYVFFTSMVVTCSAIL. Residues 326–336 are Extracellular-facing; it reads FQEWYGMTAGD. A helical transmembrane segment spans residues 337–357; the sequence is IIGTLSGFFTIIIGIFLLHAF. Over 358–410 the chain is Cytoplasmic; it reads KNTDITWSELTSTAKKEAVSLNVSENNYVLLENLECSAPGYNDDVTLFSRTDD.

Belongs to the NIPA family.

It localises to the golgi apparatus membrane. The catalysed reaction is Mg(2+)(in) = Mg(2+)(out). In terms of biological role, acts as a Mg(2+) transporter. Can also transport other divalent cations such as Fe(2+), Sr(2+), Ba(2+), Mn(2+), Cu(2+) and Co(2+) but to a much less extent than Mg(2+). The sequence is that of Magnesium transporter NIPA3 (NIPAL1) from Pongo abelii (Sumatran orangutan).